The sequence spans 493 residues: Ketol-acid reductoisomerase (NADP(+)) (493 aa).

The region spanning 14–208 (LDQLGRCRFM…GGHRAGVLES (195 aa)) is the KARI N-terminal Rossmann domain. NADP(+) contacts are provided by residues 45-48 (CGAQ), R68, R76, S78, and 108-110 (DKQ). H132 is a catalytic residue. Position 158 (G158) interacts with NADP(+). KARI C-terminal knotted domains lie at 209–345 (SFVA…APKG) and 346–486 (ENIK…MTDM). Mg(2+) is bound by residues D217, E221, E390, and E394. Residue S415 coordinates substrate.

This sequence belongs to the ketol-acid reductoisomerase family. Mg(2+) is required as a cofactor.

It carries out the reaction (2R)-2,3-dihydroxy-3-methylbutanoate + NADP(+) = (2S)-2-acetolactate + NADPH + H(+). The catalysed reaction is (2R,3R)-2,3-dihydroxy-3-methylpentanoate + NADP(+) = (S)-2-ethyl-2-hydroxy-3-oxobutanoate + NADPH + H(+). It functions in the pathway amino-acid biosynthesis; L-isoleucine biosynthesis; L-isoleucine from 2-oxobutanoate: step 2/4. Its pathway is amino-acid biosynthesis; L-valine biosynthesis; L-valine from pyruvate: step 2/4. In terms of biological role, involved in the biosynthesis of branched-chain amino acids (BCAA). Catalyzes an alkyl-migration followed by a ketol-acid reduction of (S)-2-acetolactate (S2AL) to yield (R)-2,3-dihydroxy-isovalerate. In the isomerase reaction, S2AL is rearranged via a Mg-dependent methyl migration to produce 3-hydroxy-3-methyl-2-ketobutyrate (HMKB). In the reductase reaction, this 2-ketoacid undergoes a metal-dependent reduction by NADPH to yield (R)-2,3-dihydroxy-isovalerate. The sequence is that of Ketol-acid reductoisomerase (NADP(+)) from Histophilus somni (strain 129Pt) (Haemophilus somnus).